A 2324-amino-acid chain; its full sequence is Myomegalin (2324 aa).

4 coiled-coil regions span residues 41 to 132, 158 to 205, 238 to 288, and 348 to 638; these read REDV…LVEA, QVKL…LLEE, DSHL…SLKE, and LFCS…NKQA. Disordered stretches follow at residues 72–96 and 205–240; these read TWAD…EPQQ and EPGG…SDSH. Over residues 85-96 the composition is skewed to basic and acidic residues; it reads AELRRQVEEPQQ. A compositionally biased stretch (polar residues) spans 219–238; the sequence is PTQQKPDLNETPTTQPSVSD. The tract at residues 701–747 is disordered; that stretch reads PAGATSVGPHHGEQTDQGSTQMPSRDDSTSLTAREEASIPRSTLGDS. The residue at position 705 (T705) is a Phosphothreonine. The segment covering 724–738 has biased composition (basic and acidic residues); it reads SRDDSTSLTAREEAS. Coiled coils occupy residues 745 to 822, 855 to 923, and 1011 to 1043; these read GDSD…QLVD, ENRR…EEVL, and LRAE…GFSS. 2 disordered regions span residues 1155-1182 and 1195-1216; these read LPSS…SLKL and NKSQ…STKH. 3 coiled-coil regions span residues 1213 to 1241, 1346 to 1384, and 1430 to 1455; these read STKH…SEAT, TSDD…LSAT, and GLQA…PKTG. Disordered regions lie at residues 1540–1559, 1589–1610, 1628–1685, 1742–1773, 1857–1877, and 2081–2140; these read TDRL…KEEA, RFSS…SSTS, YTHY…IPKP, APPT…SPAR, LSST…GLES, and NQQP…TPPK. The Olduvai domain maps to 1550–1641; the sequence is KDHKSEKEEA…EEKKPSPSNS (92 aa). Composition is skewed to low complexity over residues 1591-1610 and 1637-1646; these read SSPP…SSTS and SPSNSAASAS. Positions 1743-1767 are enriched in polar residues; it reads PPTSTSTLLSNHTEASSPRYSNPAQ. Residues 1821 to 2056 adopt a coiled-coil conformation; sequence GADLLEEHLG…LRLQLEQQMD (236 aa). Composition is skewed to polar residues over residues 2081–2090 and 2108–2135; these read NQQPPFQGSA and PSNS…SAAT. Residues 2248–2274 are a coiled coil; it reads EEGNLMEKELLDLRAQVSQQQQLLQST.

In terms of assembly, interacts with PDE4D. May interact with MAPRE1 and MAPRE3. May form a pericentrosomal complex with AKAP9, CDK5RAP2 and EB1/MAPRE1 in an isoform-specific manner; within this complex, may mediate MAPRE1-binding to CDK5RAP2. Interaction with AKAP9 stabilizes both proteins. May interact with CAMSAP2 in an isoform-specific manner; this interaction is much stronger in the presence of AKAP9. In complex with AKAP9, recruits CAMSAP2 to the Golgi apparatus. May interact with unglycosylated LGALS3BP in an isoform-specific manner; this interaction may connect the pericentrosomal complex to the gamma-tubulin ring complex (gamma-TuRC) to promote microtubule assembly and acetylation. In terms of tissue distribution, abundantly expressed in heart and skeletal muscle and to a lower extent in brain, lung and liver. Expressed in heart, skeletal muscle and testis (at protein level).

The protein resides in the cytoplasm. It localises to the cytoskeleton. It is found in the microtubule organizing center. Its subcellular location is the centrosome. The protein localises to the golgi apparatus. In terms of biological role, functions as an anchor sequestering components of the cAMP-dependent pathway to Golgi and/or centrosomes. May participate in microtubule dynamics, promoting microtubule assembly, in an isoform-specific manner. Depending upon the cell context, may act at the level of the Golgi apparatus or that of the centrosome. In complex with AKAP9, recruits CAMSAP2 to the Golgi apparatus and tethers non-centrosomal minus-end microtubules to the Golgi, an important step for polarized cell movement. In complex with AKAP9, EB1/MAPRE1 and CDK5RAP2, contributes to microtubules nucleation and extension from the centrosome to the cell periphery, a crucial process for directed cell migration, mitotic spindle orientation and cell-cycle progression. This is Myomegalin (Pde4dip) from Rattus norvegicus (Rat).